The chain runs to 524 residues: Lysophospholipid acyltransferase LPCAT4 (524 aa).

A run of 2 helical transmembrane segments spans residues 40–62 (CLLG…FLLW) and 87–107 (TVCH…LGFL). The short motif at 129 to 134 (HSTFFD) is the HXXXXD motif element. The N-linked (GlcNAc...) asparagine glycan is linked to Asn152. Positions 489–524 (PPHTSRGTSQTPNASSPGNPTALANGTVQAPKQKGD) are disordered. Over residues 493 to 518 (SRGTSQTPNASSPGNPTALANGTVQA) the composition is skewed to polar residues.

This sequence belongs to the 1-acyl-sn-glycerol-3-phosphate acyltransferase family. As to expression, widely expressed with predominant level in brain.

It is found in the endoplasmic reticulum membrane. It carries out the reaction a 1-acyl-sn-glycero-3-phosphoethanolamine + an acyl-CoA = a 1,2-diacyl-sn-glycero-3-phosphoethanolamine + CoA. The enzyme catalyses a 1-O-(1Z-alkenyl)-sn-glycero-3-phosphoethanolamine + an acyl-CoA = a 1-O-(1Z-alkenyl)-2-acyl-sn-glycero-3-phosphoethanolamine + CoA. It catalyses the reaction a 1-acyl-sn-glycero-3-phosphocholine + an acyl-CoA = a 1,2-diacyl-sn-glycero-3-phosphocholine + CoA. The catalysed reaction is a 1-O-alkyl-sn-glycero-3-phosphocholine + acetyl-CoA = a 1-O-alkyl-2-acetyl-sn-glycero-3-phosphocholine + CoA. It carries out the reaction a 1-acyl-sn-glycero-3-phospho-L-serine + an acyl-CoA = a 1,2-diacyl-sn-glycero-3-phospho-L-serine + CoA. The enzyme catalyses octanoyl-CoA + a 1-acyl-sn-glycero-3-phosphoethanolamine = 1-acyl-2-octanoyl-sn-glycero-3-phosphoethanolamine + CoA. It catalyses the reaction a 1-acyl-sn-glycero-3-phosphoethanolamine + hexadecanoyl-CoA = 1-acyl-2-hexadecanoyl-sn-glycero-3-phosphoethanolamine + CoA. The catalysed reaction is a 1-acyl-sn-glycero-3-phosphoethanolamine + octadecanoyl-CoA = 1-acyl-2-octadecanoyl-sn-glycero-3-phosphoethanolamine + CoA. It carries out the reaction a 1-acyl-sn-glycero-3-phosphoethanolamine + (9Z)-octadecenoyl-CoA = 1-acyl-2-(9Z)-octadecenoyl-sn-glycero-3-phosphoethanolamine + CoA. The enzyme catalyses a 1-acyl-sn-glycero-3-phosphoethanolamine + (5Z,8Z,11Z,14Z)-eicosatetraenoyl-CoA = 1-acyl-2-(5Z,8Z,11Z,14Z)-eicosatetraenoyl-sn-glycero-3-phosphoethanolamine + CoA. It catalyses the reaction a 1-O-(1Z-alkenyl)-sn-glycero-3-phosphoethanolamine + octanoyl-CoA = 1-O-(1Z)-alkenyl-2-octanoyl-sn-glycero-3-phosphoethanolamine + CoA. The catalysed reaction is a 1-O-(1Z-alkenyl)-sn-glycero-3-phosphoethanolamine + hexadecanoyl-CoA = 1-O-(1Z)-alkenyl-2-hexadecanoyl-sn-glycero-3-phosphoethanolamine + CoA. It carries out the reaction a 1-O-(1Z-alkenyl)-sn-glycero-3-phosphoethanolamine + octadecanoyl-CoA = 1-O-(1Z)-alkenyl-2-octadecanoyl-sn-glycero-3-phosphoethanolamine + CoA. The enzyme catalyses a 1-O-(1Z-alkenyl)-sn-glycero-3-phosphoethanolamine + (9Z)-octadecenoyl-CoA = 1-O-(1Z)-alkenyl-2-(9Z)-octadecenoyl-sn-glycero-3-phosphoethanolamine + CoA. It catalyses the reaction a 1-O-(1Z-alkenyl)-sn-glycero-3-phosphoethanolamine + (5Z,8Z,11Z,14Z)-eicosatetraenoyl-CoA = 1-O-(1Z)-alkenyl-2-(5Z,8Z,11Z,14Z)-eicosatetraenoyl-sn-glycero-3-phosphoethanolamine + CoA. The catalysed reaction is a 1-acyl-sn-glycero-3-phosphocholine + hexadecanoyl-CoA = 1-acyl-2-hexadecanoyl-sn-glycero-3-phosphocholine + CoA. It carries out the reaction a 1-acyl-sn-glycero-3-phosphocholine + (9Z)-octadecenoyl-CoA = a 1-acyl-2-(9Z)-octadecenoyl-sn-glycero-3-phosphocholine + CoA. The enzyme catalyses 1-O-hexadecyl-sn-glycero-3-phosphocholine + (9Z)-octadecenoyl-CoA = 1-O-hexadecyl-2-(9Z)-octadecenoyl-sn-glycero-3-phosphocholine + CoA. It catalyses the reaction 1-O-hexadecyl-sn-glycero-3-phosphocholine + (5Z,8Z,11Z,14Z)-eicosatetraenoyl-CoA = 1-O-hexadecyl-2-(5Z,8Z,11Z,14Z)-eicosatetraenoyl-sn-glycero-3-phosphocholine + CoA. The catalysed reaction is 1-hexadecanoyl-sn-glycero-3-phospho-L-serine + (9Z)-octadecenoyl-CoA = 1-hexadecanoyl-2-(9Z-octadecenoyl)-sn-glycero-3-phospho-L-serine + CoA. It carries out the reaction 1-octadecanoyl-sn-glycero-3-phospho-(1'-sn-glycerol) + (9Z)-octadecenoyl-CoA = 1-octadecanoyl-2-(9Z-octadecenoyl)-sn-glycero-3-phospho-(1'-sn-glycerol) + CoA. The enzyme catalyses 1-octadecanoyl-sn-glycero-3-phospho-(1'-sn-glycerol) + (5Z,8Z,11Z,14Z)-eicosatetraenoyl-CoA = 1-octadecanoyl-2-(5Z,8Z,11Z,14Z-eicosatetraenoyl)-sn-glycero-3-phospho-(1'-sn-glycerol) + CoA. It functions in the pathway lipid metabolism; phospholipid metabolism. Its function is as follows. Displays acyl-CoA-dependent lysophospholipid acyltransferase activity with a subset of lysophospholipids as substrates; converts lysophosphatidylethanolamine to phosphatidylethanolamine, lysophosphatidylcholine to phosphatidycholine, 1-alkenyl-lysophatidylethanolamine to 1-alkenyl-phosphatidylethanolamine, lysophosphatidylglycerol and alkyl-lysophosphatidylcholine to phosphatidylglycerol and alkyl-phosphatidylcholine, respectively. In contrast, has no lysophosphatidylinositol, glycerol-3-phosphate, diacylglycerol or lysophosphatidic acid acyltransferase activity. Prefers long chain acyl-CoAs (C16, C18) as acyl donors. The sequence is that of Lysophospholipid acyltransferase LPCAT4 (LPCAT4) from Homo sapiens (Human).